Consider the following 357-residue polypeptide: DNA primase small subunit PriS (357 aa).

Residues Asp105, Asp107, and Asp259 contribute to the active site.

This sequence belongs to the eukaryotic-type primase small subunit family. In terms of assembly, heterodimer of a small subunit (PriS) and a large subunit (PriL). Mg(2+) serves as cofactor. The cofactor is Mn(2+).

In terms of biological role, catalytic subunit of DNA primase, an RNA polymerase that catalyzes the synthesis of short RNA molecules used as primers for DNA polymerase during DNA replication. The small subunit contains the primase catalytic core and has DNA synthesis activity on its own. Binding to the large subunit stabilizes and modulates the activity, increasing the rate of DNA synthesis while decreasing the length of the DNA fragments, and conferring RNA synthesis capability. The DNA polymerase activity may enable DNA primase to also catalyze primer extension after primer synthesis. May also play a role in DNA repair. This Methanococcus maripaludis (strain C5 / ATCC BAA-1333) protein is DNA primase small subunit PriS.